We begin with the raw amino-acid sequence, 327 residues long: Annexin A8 (327 aa).

4 Annexin repeats span residues 21 to 92 (FNPD…ALMY), 93 to 164 (PPYR…CLLQ), 177 to 249 (GLAL…TVVK), and 253 to 324 (NVHS…NLVG). Residues methionine 266, glycine 268, glycine 270, and aspartate 310 each contribute to the Ca(2+) site.

Belongs to the annexin family.

Functionally, this protein is an anticoagulant protein that acts as an indirect inhibitor of the thromboplastin-specific complex, which is involved in the blood coagulation cascade. This is Annexin A8 (Anxa8) from Rattus norvegicus (Rat).